The chain runs to 307 residues: Protein phosphatase EYA (307 aa).

The segment at Met-1 to Asp-15 is necessary for optimum phosphatase activity. The active-site Nucleophile is the Asp-25. Residues Asp-25, Asp-27, and Asp-253 each contribute to the Mg(2+) site. Asp-27 functions as the Proton donor in the catalytic mechanism.

This sequence belongs to the HAD-like hydrolase superfamily. EYA family. Requires Mg(2+) as cofactor.

The enzyme catalyses O-phospho-L-tyrosyl-[protein] + H2O = L-tyrosyl-[protein] + phosphate. With respect to regulation, inhibited by EDTA. Functionally, possesses phosphatase activity toward para-nitrophenyl phosphate (pNPP) in vitro. Possesses phosphatase activity toward several phosphotyrosine-containing peptides in vitro, with low peptide substrate specificity. The chain is Protein phosphatase EYA from Arabidopsis thaliana (Mouse-ear cress).